The sequence spans 522 residues: ATP synthase subunit alpha (522 aa).

176–183 (GDRQTGKT) lines the ATP pocket.

This sequence belongs to the ATPase alpha/beta chains family. In terms of assembly, F-type ATPases have 2 components, CF(1) - the catalytic core - and CF(0) - the membrane proton channel. CF(1) has five subunits: alpha(3), beta(3), gamma(1), delta(1), epsilon(1). CF(0) has four main subunits: a, b, b' and c.

Its subcellular location is the cell membrane. The enzyme catalyses ATP + H2O + 4 H(+)(in) = ADP + phosphate + 5 H(+)(out). Functionally, produces ATP from ADP in the presence of a proton gradient across the membrane. The alpha chain is a regulatory subunit. The polypeptide is ATP synthase subunit alpha (Chloroflexus aggregans (strain MD-66 / DSM 9485)).